Reading from the N-terminus, the 200-residue chain is Probable molybdenum cofactor guanylyltransferase (200 aa).

GTP-binding positions include 9-11 (LAG), K21, D69, and D100. Position 100 (D100) interacts with Mg(2+).

It belongs to the MobA family. The cofactor is Mg(2+).

The protein resides in the cytoplasm. It carries out the reaction Mo-molybdopterin + GTP + H(+) = Mo-molybdopterin guanine dinucleotide + diphosphate. Its function is as follows. Transfers a GMP moiety from GTP to Mo-molybdopterin (Mo-MPT) cofactor (Moco or molybdenum cofactor) to form Mo-molybdopterin guanine dinucleotide (Mo-MGD) cofactor. This chain is Probable molybdenum cofactor guanylyltransferase, found in Bacillus cereus (strain G9842).